The chain runs to 166 residues: Putative tRNA (cytidine(34)-2'-O)-methyltransferase (166 aa).

S-adenosyl-L-methionine-binding residues include L83, G109, I130, and S138.

This sequence belongs to the class IV-like SAM-binding methyltransferase superfamily. RNA methyltransferase TrmH family. TrmL subfamily.

It is found in the cytoplasm. The catalysed reaction is cytidine(34) in tRNA + S-adenosyl-L-methionine = 2'-O-methylcytidine(34) in tRNA + S-adenosyl-L-homocysteine + H(+). It catalyses the reaction 5-carboxymethylaminomethyluridine(34) in tRNA(Leu) + S-adenosyl-L-methionine = 5-carboxymethylaminomethyl-2'-O-methyluridine(34) in tRNA(Leu) + S-adenosyl-L-homocysteine + H(+). Could methylate the ribose at the nucleotide 34 wobble position in tRNA. The chain is Putative tRNA (cytidine(34)-2'-O)-methyltransferase from Mycoplasma genitalium (strain ATCC 33530 / DSM 19775 / NCTC 10195 / G37) (Mycoplasmoides genitalium).